Here is a 115-residue protein sequence, read N- to C-terminus: MKFVLLFGVLLVTLFSYSSAEMLDDFDQADEDELLSLIEKEEARAKECTPRFCDCSHDRHSCCRSELFKDVCTCFYPEGGDNEVCTCQQPKHLKYMEKAADKAKKFGGKIKKWFG.

A signal peptide spans 1-20 (MKFVLLFGVLLVTLFSYSSA). A propeptide spanning residues 21-44 (EMLDDFDQADEDELLSLIEKEEAR) is cleaved from the precursor. Disulfide bonds link Cys48/Cys63, Cys55/Cys72, Cys62/Cys87, and Cys74/Cys85.

Belongs to the neurotoxin 19 (CSTX) family. 01 subfamily. As to expression, expressed by the venom gland.

The protein localises to the secreted. The protein is U3-lycotoxin-Ls1c of Lycosa singoriensis (Wolf spider).